Here is a 303-residue protein sequence, read N- to C-terminus: Heme A synthase (303 aa).

Over 1-8 (MFGKKNLK) the chain is Cytoplasmic. Residues 9-29 (WLGVVATLMMTFVQLGGALVT) form a helical membrane-spanning segment. Residues 30–67 (KTGSADGCGSSWPLCHGALIPEFFPIDTIIELSHRAVS) are Extracellular-facing. Cysteines 37 and 44 form a disulfide. The active site involves E60. A heme o-binding site is contributed by H63. A helical transmembrane segment spans residues 68–88 (ALSLLMVLWLVITAWKHIGYI). Topologically, residues 89-93 (KEIKP) are cytoplasmic. The chain crosses the membrane as a helical span at residues 94 to 114 (LSIISVGFLLLQALIGAAAVI). Over 115 to 125 (WQQNDYVLALH) the chain is Extracellular. H125 contacts heme o. Residues 126–146 (FGISLISFSSVFLITLIIFSI) traverse the membrane as a helical segment. The Cytoplasmic segment spans residues 147 to 163 (DQKYEADELYIKKPLRR). The chain crosses the membrane as a helical span at residues 164–184 (LTWLMAIIIYCGVYTGALVRH). At 185–215 (ADASLAYGGWPLPFHDLVPHSEQDWVQLTHR) the chain is on the extracellular side. H214 is a binding site for heme b. The chain crosses the membrane as a helical span at residues 216 to 236 (IMAFIVFTIIMITYIHAVKNY). Residues 237 to 244 (PNNRTVHY) lie on the Cytoplasmic side of the membrane. A helical membrane pass occupies residues 245–265 (GYTAAFILVILQVITGALSIM). Topologically, residues 266–270 (TNVNL) are extracellular. A helical transmembrane segment spans residues 271–291 (LIALFHALFITYLFGMTTYFI). H276 is a binding site for heme b. Residues 292 to 303 (MLMLRSVRSDKQ) lie on the Cytoplasmic side of the membrane.

The protein belongs to the COX15/CtaA family. Type 1 subfamily. In terms of assembly, interacts with CtaB. Requires heme b as cofactor.

Its subcellular location is the cell membrane. It catalyses the reaction Fe(II)-heme o + 2 A + H2O = Fe(II)-heme a + 2 AH2. Its pathway is porphyrin-containing compound metabolism; heme A biosynthesis; heme A from heme O: step 1/1. Its function is as follows. Catalyzes the conversion of heme O to heme A by two successive hydroxylations of the methyl group at C8. The first hydroxylation forms heme I, the second hydroxylation results in an unstable dihydroxymethyl group, which spontaneously dehydrates, resulting in the formyl group of heme A. The chain is Heme A synthase from Staphylococcus aureus (strain MSSA476).